Here is a 277-residue protein sequence, read N- to C-terminus: Caspase-3 (277 aa).

The residue at position 1 (Met-1) is an N-acetylmethionine. 2 propeptides span residues 1–9 and 10–28; these read MENNETSVD and AKSI…KSMD. N6-acetyllysine is present on Lys-11. Position 26 is a phosphoserine (Ser-26). Catalysis depends on residues His-121 and Cys-163. Cys-163 is subject to S-nitrosocysteine; in inhibited form.

The protein belongs to the peptidase C14A family. In terms of assembly, heterotetramer that consists of two anti-parallel arranged heterodimers, each one formed by a 17 kDa (p17) and a 12 kDa (p12) subunit. Interacts with BIRC6/bruce. In terms of processing, cleavage by granzyme B, caspase-6, caspase-8 and caspase-10 generates the two active subunits. Additional processing of the propeptides is likely due to the autocatalytic activity of the activated protease. Active heterodimers between the small subunit of caspase-7 protease and the large subunit of caspase-3 also occur and vice versa. S-nitrosylated on its catalytic site cysteine in unstimulated cell lines and denitrosylated upon activation of the Fas apoptotic pathway, associated with an increase in intracellular caspase activity. Fas therefore activates caspase-3 not only by inducing the cleavage of the caspase zymogen to its active subunits, but also by stimulating the denitrosylation of its active site thiol. Post-translationally, ubiquitinated by BIRC6; this activity is inhibited by DIABLO/SMAC.

Its subcellular location is the cytoplasm. The catalysed reaction is Strict requirement for an Asp residue at positions P1 and P4. It has a preferred cleavage sequence of Asp-Xaa-Xaa-Asp-|- with a hydrophobic amino-acid residue at P2 and a hydrophilic amino-acid residue at P3, although Val or Ala are also accepted at this position.. Inhibited by BIRC6; following inhibition of BIRC6-caspase binding by DIABLO/SMAC, BIRC6 is subjected to caspase cleavage, leading to an increase in active caspases. Functionally, involved in the activation cascade of caspases responsible for apoptosis execution. At the onset of apoptosis, it proteolytically cleaves poly(ADP-ribose) polymerase PARP1 at a '216-Asp-|-Gly-217' bond. Cleaves and activates sterol regulatory element binding proteins (SREBPs) between the basic helix-loop-helix leucine zipper domain and the membrane attachment domain. Cleaves and activates caspase-6, -7 and -9 (CASP6, CASP7 and CASP9, respectively). Cleaves and inactivates interleukin-18 (IL18). Triggers cell adhesion in sympathetic neurons through RET cleavage. Cleaves IL-1 beta between an Asp and an Ala, releasing the mature cytokine which is involved in a variety of inflammatory processes. Cleaves and inhibits serine/threonine-protein kinase AKT1 in response to oxidative stress. Acts as an inhibitor of type I interferon production during virus-induced apoptosis by mediating cleavage of antiviral proteins CGAS, IRF3 and MAVS, thereby preventing cytokine overproduction. Also involved in pyroptosis by mediating cleavage and activation of gasdermin-E (GSDME). Cleaves XRCC4 and phospholipid scramblase proteins XKR4, XKR8 and XKR9, leading to promote phosphatidylserine exposure on apoptotic cell surface. Cleaves BIRC6 following inhibition of BIRC6-caspase binding by DIABLO/SMAC. The polypeptide is Caspase-3 (CASP3) (Oryctolagus cuniculus (Rabbit)).